Consider the following 454-residue polypeptide: MSTTVIILAAGKGTRMRSQLPKVLQPLAGRPLLGHVIKTAKQLLAENIITIYGHGGDHVKKTFAQENIQWVEQAEQLGTGHAVQMTLPVLPKDGISLILYGDVPLVRQTTLEQLIEVSNKTGIGMITLHVDNPTGYGRIVRQDGKIQAIVEHKDATEAQRQIQEINTGIYCVSNAKLHEWLPKLSNENAQGEYYLTDIVAMAVADGLEIASIQPELAFEVEGVNDRLQLAALEREFQKQQAKELMQQGVTFADPARFDLRGTVKVGHDVRIDVNVIIEGNCELGDFVEIGAGCILKNTTIAAGTKVQAYSVFDGAVVGENTQIGPFARLRPGAKLANEVHIGNFVEVKNTTIGLGSKANHFTYLGDAEIGAESNIGAGTITCNYDGANKHKTTIGDAVFIGSNSSLVAPVTIGNGATVGAGSVITKDVAEQSLSFERAQQISKANYQRPQKLKK.

The pyrophosphorylase stretch occupies residues 1–226 (MSTTVIILAA…AFEVEGVNDR (226 aa)). Residues 8–11 (LAAG), Lys22, Gln73, 78–79 (GT), 100–102 (YGD), Gly137, Glu151, Asn166, and Asn224 contribute to the UDP-N-acetyl-alpha-D-glucosamine site. Asp102 contributes to the Mg(2+) binding site. Mg(2+) is bound at residue Asn224. Residues 227 to 247 (LQLAALEREFQKQQAKELMQQ) are linker. The segment at 248–454 (GVTFADPARF…NYQRPQKLKK (207 aa)) is N-acetyltransferase. The UDP-N-acetyl-alpha-D-glucosamine site is built by Arg330 and Lys348. Catalysis depends on His360, which acts as the Proton acceptor. UDP-N-acetyl-alpha-D-glucosamine contacts are provided by Tyr363 and Asn374. Residues Ala377, 383–384 (NY), Ser402, Ala420, and Arg437 each bind acetyl-CoA.

It in the N-terminal section; belongs to the N-acetylglucosamine-1-phosphate uridyltransferase family. The protein in the C-terminal section; belongs to the transferase hexapeptide repeat family. In terms of assembly, homotrimer. The cofactor is Mg(2+).

The protein resides in the cytoplasm. It catalyses the reaction alpha-D-glucosamine 1-phosphate + acetyl-CoA = N-acetyl-alpha-D-glucosamine 1-phosphate + CoA + H(+). The enzyme catalyses N-acetyl-alpha-D-glucosamine 1-phosphate + UTP + H(+) = UDP-N-acetyl-alpha-D-glucosamine + diphosphate. It participates in nucleotide-sugar biosynthesis; UDP-N-acetyl-alpha-D-glucosamine biosynthesis; N-acetyl-alpha-D-glucosamine 1-phosphate from alpha-D-glucosamine 6-phosphate (route II): step 2/2. Its pathway is nucleotide-sugar biosynthesis; UDP-N-acetyl-alpha-D-glucosamine biosynthesis; UDP-N-acetyl-alpha-D-glucosamine from N-acetyl-alpha-D-glucosamine 1-phosphate: step 1/1. It functions in the pathway bacterial outer membrane biogenesis; LPS lipid A biosynthesis. Catalyzes the last two sequential reactions in the de novo biosynthetic pathway for UDP-N-acetylglucosamine (UDP-GlcNAc). The C-terminal domain catalyzes the transfer of acetyl group from acetyl coenzyme A to glucosamine-1-phosphate (GlcN-1-P) to produce N-acetylglucosamine-1-phosphate (GlcNAc-1-P), which is converted into UDP-GlcNAc by the transfer of uridine 5-monophosphate (from uridine 5-triphosphate), a reaction catalyzed by the N-terminal domain. The sequence is that of Bifunctional protein GlmU from Acinetobacter baumannii (strain AYE).